The chain runs to 465 residues: tRNA (guanine(37)-N(1))-methyltransferase (465 aa).

Residues 1 to 20 (MDKNSQLRDMNLFRAPAARA) constitute a mitochondrion transit peptide. S-adenosyl-L-methionine-binding positions include H238 and 304–305 (DG). A disordered region spans residues 326-345 (AVIKPPRPPRKSAAPPPEPV). Residue N359 participates in S-adenosyl-L-methionine binding.

Belongs to the class I-like SAM-binding methyltransferase superfamily. TRM5/TYW2 family. In terms of assembly, monomer.

The protein localises to the mitochondrion matrix. The protein resides in the nucleus. It localises to the cytoplasm. It catalyses the reaction guanosine(37) in tRNA + S-adenosyl-L-methionine = N(1)-methylguanosine(37) in tRNA + S-adenosyl-L-homocysteine + H(+). In terms of biological role, specifically methylates the N1 position of guanosine-37 in various cytoplasmic and mitochondrial tRNAs. Methylation is not dependent on the nature of the nucleoside 5' of the target nucleoside. This is the first step in the biosynthesis of wybutosine (yW), a modified base adjacent to the anticodon of tRNAs and required for accurate decoding. This Fusarium vanettenii (strain ATCC MYA-4622 / CBS 123669 / FGSC 9596 / NRRL 45880 / 77-13-4) (Fusarium solani subsp. pisi) protein is tRNA (guanine(37)-N(1))-methyltransferase.